A 199-amino-acid polypeptide reads, in one-letter code: Recombination protein RecR (199 aa).

The C4-type zinc-finger motif lies at 58–73 (CKTCGNIDTQSPCTVC). Residues 81–176 (AMIVVVADVA…KVTRLAHGVP (96 aa)) form the Toprim domain.

Belongs to the RecR family.

In terms of biological role, may play a role in DNA repair. It seems to be involved in an RecBC-independent recombinational process of DNA repair. It may act with RecF and RecO. This is Recombination protein RecR from Bradyrhizobium sp. (strain BTAi1 / ATCC BAA-1182).